A 195-amino-acid chain; its full sequence is Imidazoleglycerol-phosphate dehydratase (195 aa).

The protein belongs to the imidazoleglycerol-phosphate dehydratase family.

It is found in the cytoplasm. The enzyme catalyses D-erythro-1-(imidazol-4-yl)glycerol 3-phosphate = 3-(imidazol-4-yl)-2-oxopropyl phosphate + H2O. It functions in the pathway amino-acid biosynthesis; L-histidine biosynthesis; L-histidine from 5-phospho-alpha-D-ribose 1-diphosphate: step 6/9. In Thermotoga maritima (strain ATCC 43589 / DSM 3109 / JCM 10099 / NBRC 100826 / MSB8), this protein is Imidazoleglycerol-phosphate dehydratase.